A 346-amino-acid chain; its full sequence is Methylthioribose-1-phosphate isomerase (346 aa).

Residues 54–56 (RGA), Arg-91, and Gln-192 each bind substrate. The active-site Proton donor is the Asp-233. Residue 243–244 (NK) coordinates substrate.

Belongs to the eIF-2B alpha/beta/delta subunits family. MtnA subfamily.

It catalyses the reaction 5-(methylsulfanyl)-alpha-D-ribose 1-phosphate = 5-(methylsulfanyl)-D-ribulose 1-phosphate. It functions in the pathway amino-acid biosynthesis; L-methionine biosynthesis via salvage pathway; L-methionine from S-methyl-5-thio-alpha-D-ribose 1-phosphate: step 1/6. Functionally, catalyzes the interconversion of methylthioribose-1-phosphate (MTR-1-P) into methylthioribulose-1-phosphate (MTRu-1-P). In Yersinia enterocolitica serotype O:8 / biotype 1B (strain NCTC 13174 / 8081), this protein is Methylthioribose-1-phosphate isomerase.